Consider the following 382-residue polypeptide: GTPase Obg (382 aa).

The 160-residue stretch at 2 to 161 (VKFADESKIR…REIIVELNII (160 aa)) folds into the Obg domain. Residues 162–328 (ADIGLVGFPN…VKKAFIRLAD (167 aa)) enclose the OBG-type G domain. Residues 168-175 (GFPNAGKS), 193-197 (FTTKI), 215-218 (DIPG), 282-285 (TKLD), and 309-311 (SLY) contribute to the GTP site. Ser175 and Thr195 together coordinate Mg(2+). The segment at 360-382 (EEKNDDEHFGATVSLSRKRKPKK) is disordered.

This sequence belongs to the TRAFAC class OBG-HflX-like GTPase superfamily. OBG GTPase family. Monomer. It depends on Mg(2+) as a cofactor.

The protein localises to the cytoplasm. Functionally, an essential GTPase which binds GTP, GDP and possibly (p)ppGpp with moderate affinity, with high nucleotide exchange rates and a fairly low GTP hydrolysis rate. Plays a role in control of the cell cycle, stress response, ribosome biogenesis and in those bacteria that undergo differentiation, in morphogenesis control. The sequence is that of GTPase Obg from Treponema denticola (strain ATCC 35405 / DSM 14222 / CIP 103919 / JCM 8153 / KCTC 15104).